Consider the following 86-residue polypeptide: Cell division topological specificity factor (86 aa).

Belongs to the MinE family.

Functionally, prevents the cell division inhibition by proteins MinC and MinD at internal division sites while permitting inhibition at polar sites. This ensures cell division at the proper site by restricting the formation of a division septum at the midpoint of the long axis of the cell. This Parasynechococcus marenigrum (strain WH8102) protein is Cell division topological specificity factor.